A 75-amino-acid chain; its full sequence is Cytochrome c oxidase subunit 6C (75 aa).

Residues 1–13 lie on the Mitochondrial matrix side of the membrane; sequence MAPEVLPKPQMRG. A helical transmembrane segment spans residues 14–54; sequence LLAKRLRFHMVTAFVLSLGVAALYKFRVADKRKKAYADFYR. Residues 55–75 are Mitochondrial intermembrane-facing; sequence NYDAMKDFEEMRKAGIFQSVK.

The protein belongs to the cytochrome c oxidase subunit 6c family. As to quaternary structure, component of the cytochrome c oxidase (complex IV, CIV), a multisubunit enzyme composed of 14 subunits. The complex is composed of a catalytic core of 3 subunits MT-CO1, MT-CO2 and MT-CO3, encoded in the mitochondrial DNA, and 11 supernumerary subunits COX4I, COX5A, COX5B, COX6A, COX6B, COX6C, COX7A, COX7B, COX7C, COX8 and NDUFA4, which are encoded in the nuclear genome. The complex exists as a monomer or a dimer and forms supercomplexes (SCs) in the inner mitochondrial membrane with NADH-ubiquinone oxidoreductase (complex I, CI) and ubiquinol-cytochrome c oxidoreductase (cytochrome b-c1 complex, complex III, CIII), resulting in different assemblies (supercomplex SCI(1)III(2)IV(1) and megacomplex MCI(2)III(2)IV(2)).

Its subcellular location is the mitochondrion inner membrane. It participates in energy metabolism; oxidative phosphorylation. Component of the cytochrome c oxidase, the last enzyme in the mitochondrial electron transport chain which drives oxidative phosphorylation. The respiratory chain contains 3 multisubunit complexes succinate dehydrogenase (complex II, CII), ubiquinol-cytochrome c oxidoreductase (cytochrome b-c1 complex, complex III, CIII) and cytochrome c oxidase (complex IV, CIV), that cooperate to transfer electrons derived from NADH and succinate to molecular oxygen, creating an electrochemical gradient over the inner membrane that drives transmembrane transport and the ATP synthase. Cytochrome c oxidase is the component of the respiratory chain that catalyzes the reduction of oxygen to water. Electrons originating from reduced cytochrome c in the intermembrane space (IMS) are transferred via the dinuclear copper A center (CU(A)) of subunit 2 and heme A of subunit 1 to the active site in subunit 1, a binuclear center (BNC) formed by heme A3 and copper B (CU(B)). The BNC reduces molecular oxygen to 2 water molecules using 4 electrons from cytochrome c in the IMS and 4 protons from the mitochondrial matrix. The polypeptide is Cytochrome c oxidase subunit 6C (COX6C) (Trachypithecus cristatus (Silvered leaf-monkey)).